A 428-amino-acid chain; its full sequence is GTPase Obg (428 aa).

An Obg domain is found at 1 to 158 (MFIDIAKVFI…LSIVLELKLL (158 aa)). One can recognise an OBG-type G domain in the interval 159–331 (ADVGLLGFPN…VIKEAARMLK (173 aa)). Residues 165-172 (GFPNVGKS), 190-194 (FTTLK), 212-215 (DIPG), 282-285 (NKSD), and 312-314 (SAA) contribute to the GTP site. Residues Ser-172 and Thr-192 each coordinate Mg(2+). The region spanning 345 to 428 (MYIPEEKKFT…LNDFEFEYLL (84 aa)) is the OCT domain.

The protein belongs to the TRAFAC class OBG-HflX-like GTPase superfamily. OBG GTPase family. In terms of assembly, monomer. The cofactor is Mg(2+).

The protein resides in the cytoplasm. Its function is as follows. An essential GTPase which binds GTP, GDP and possibly (p)ppGpp with moderate affinity, with high nucleotide exchange rates and a fairly low GTP hydrolysis rate. Plays a role in control of the cell cycle, stress response, ribosome biogenesis and in those bacteria that undergo differentiation, in morphogenesis control. The polypeptide is GTPase Obg (Clostridium botulinum (strain Alaska E43 / Type E3)).